A 78-amino-acid chain; its full sequence is Large ribosomal subunit protein bL28 (78 aa).

The disordered stretch occupies residues 1–20 (MSRVCQVTGKGPVTGNNISH).

Belongs to the bacterial ribosomal protein bL28 family.

The protein is Large ribosomal subunit protein bL28 of Azotobacter vinelandii (strain DJ / ATCC BAA-1303).